The primary structure comprises 946 residues: DNA primase (946 aa).

Residues 596–626 form a disordered region; the sequence is RDTEEDEDGKENKNNVPDNGVFQKTTSSVDT. Residues 617–626 are compositionally biased toward polar residues; that stretch reads FQKTTSSVDT. The segment at 881 to 920 adopts a CHC2-type zinc-finger fold; sequence CLNYTHRNPQETVQVFIDLRTEHSYALWASLWSRCFTKKC.

The protein belongs to the herpesviridae DNA primase family. As to quaternary structure, associates with the helicase and the primase-associated factor to form the helicase-primase factor. Interacts with host SNAPIN.

It is found in the host nucleus. Functionally, essential component of the helicase/primase complex. Unwinds the DNA at the replication forks and generates single-stranded DNA for both leading and lagging strand synthesis. The primase initiates primer synthesis and thereby produces large amount of short RNA primers on the lagging strand that the polymerase elongates using dNTPs. The sequence is that of DNA primase (UL70) from Homo sapiens (Human).